The primary structure comprises 390 residues: 1-deoxy-D-xylulose 5-phosphate reductoisomerase (390 aa).

NADPH is bound by residues T18, G19, S20, I21, and N130. Position 131 (K131) interacts with 1-deoxy-D-xylulose 5-phosphate. Residue E132 coordinates NADPH. D156 provides a ligand contact to Mn(2+). Positions 157, 158, 182, and 205 each coordinate 1-deoxy-D-xylulose 5-phosphate. Residue E158 participates in Mn(2+) binding. Position 211 (G211) interacts with NADPH. Positions 218, 223, 224, and 227 each coordinate 1-deoxy-D-xylulose 5-phosphate. A Mn(2+)-binding site is contributed by E227.

It belongs to the DXR family. Mg(2+) serves as cofactor. Requires Mn(2+) as cofactor.

The enzyme catalyses 2-C-methyl-D-erythritol 4-phosphate + NADP(+) = 1-deoxy-D-xylulose 5-phosphate + NADPH + H(+). Its pathway is isoprenoid biosynthesis; isopentenyl diphosphate biosynthesis via DXP pathway; isopentenyl diphosphate from 1-deoxy-D-xylulose 5-phosphate: step 1/6. Its function is as follows. Catalyzes the NADPH-dependent rearrangement and reduction of 1-deoxy-D-xylulose-5-phosphate (DXP) to 2-C-methyl-D-erythritol 4-phosphate (MEP). This is 1-deoxy-D-xylulose 5-phosphate reductoisomerase from Bacteroides thetaiotaomicron (strain ATCC 29148 / DSM 2079 / JCM 5827 / CCUG 10774 / NCTC 10582 / VPI-5482 / E50).